A 923-amino-acid chain; its full sequence is SPX and EXS domain-containing protein 1 (923 aa).

Positions 1–326 (MKFGKKLRFE…PMNSSIKLDQ (326 aa)) constitute an SPX domain. Low complexity-rich tracts occupy residues 94–147 (QEQS…QQQQ) and 186–195 (TTTTTTTTTT). 2 disordered regions span residues 94 to 150 (QEQS…QDLK) and 185 to 208 (PTTT…FKNK). The next 9 helical transmembrane spans lie at 382–402 (LKLG…IILF), 416–436 (FVST…VWLW), 471–491 (ASFL…TVTG), 499–519 (PAQV…FFPF), 529–551 (LLFI…RALF), 591–611 (SIAL…QCIL), 620–640 (IHLG…FSAL), 655–675 (ILWC…DVVV), and 700–720 (WSYY…TLTI). In terms of domain architecture, EXS spans 585–785 (RCNQVNSIAL…KNEVPKVESP (201 aa)). A disordered region spans residues 793–871 (SSYPYRQDNF…NNSPSGSNSS (79 aa)).

Belongs to the SYG1 (TC 2.A.94) family.

The protein localises to the membrane. This chain is SPX and EXS domain-containing protein 1, found in Dictyostelium discoideum (Social amoeba).